Here is a 461-residue protein sequence, read N- to C-terminus: tRNA modification GTPase MnmE (461 aa).

Arginine 23, glutamate 84, and lysine 123 together coordinate (6S)-5-formyl-5,6,7,8-tetrahydrofolate. Positions glycine 219–alanine 382 constitute a TrmE-type G domain. GTP contacts are provided by residues asparagine 229–threonine 234, serine 248–threonine 254, aspartate 273–glycine 276, and asparagine 337–aspartate 340. Mg(2+) contacts are provided by serine 233 and threonine 254. Lysine 461 is a binding site for (6S)-5-formyl-5,6,7,8-tetrahydrofolate.

The protein belongs to the TRAFAC class TrmE-Era-EngA-EngB-Septin-like GTPase superfamily. TrmE GTPase family. Homodimer. Heterotetramer of two MnmE and two MnmG subunits. Requires K(+) as cofactor.

The protein resides in the cytoplasm. Exhibits a very high intrinsic GTPase hydrolysis rate. Involved in the addition of a carboxymethylaminomethyl (cmnm) group at the wobble position (U34) of certain tRNAs, forming tRNA-cmnm(5)s(2)U34. In Salinibacter ruber (strain DSM 13855 / M31), this protein is tRNA modification GTPase MnmE.